Consider the following 81-residue polypeptide: Photosystem I iron-sulfur center (81 aa).

2 consecutive 4Fe-4S ferredoxin-type domains span residues 2–31 (SHSV…MIPW) and 39–68 (IASA…VRVY). Residues C11, C14, C17, C21, C48, C51, C54, and C58 each coordinate [4Fe-4S] cluster.

In terms of assembly, the eukaryotic PSI reaction center is composed of at least 11 subunits. Requires [4Fe-4S] cluster as cofactor.

The protein resides in the plastid thylakoid membrane. It carries out the reaction reduced [plastocyanin] + hnu + oxidized [2Fe-2S]-[ferredoxin] = oxidized [plastocyanin] + reduced [2Fe-2S]-[ferredoxin]. In terms of biological role, apoprotein for the two 4Fe-4S centers FA and FB of photosystem I (PSI); essential for photochemical activity. FB is the terminal electron acceptor of PSI, donating electrons to ferredoxin. The C-terminus interacts with PsaA/B/D and helps assemble the protein into the PSI complex. Required for binding of PsaD and PsaE to PSI. PSI is a plastocyanin-ferredoxin oxidoreductase, converting photonic excitation into a charge separation, which transfers an electron from the donor P700 chlorophyll pair to the spectroscopically characterized acceptors A0, A1, FX, FA and FB in turn. In Cuscuta gronovii (Common dodder), this protein is Photosystem I iron-sulfur center.